The chain runs to 391 residues: Somatostatin receptor type 1 (391 aa).

The segment at 1 to 50 is disordered; sequence MFPNGTASSPSSSPSPSPGSCGEGACSRGPGSGAADGMEEPGRNASQNGT. Over 1 to 56 the chain is Extracellular; the sequence is MFPNGTASSPSSSPSPSPGSCGEGACSRGPGSGAADGMEEPGRNASQNGTLSEGQG. A glycan (N-linked (GlcNAc...) asparagine) is linked at Asn-4. Low complexity predominate over residues 8–20; the sequence is SSPSSSPSPSPGS. N-linked (GlcNAc...) asparagine glycosylation is found at Asn-44 and Asn-48. Residues 57–84 traverse the membrane as a helical segment; it reads SAILISFIYSVVCLVGLCGNSMVIYVIL. Over 85-94 the chain is Cytoplasmic; that stretch reads RYAKMKTATN. Residues 95–120 form a helical membrane-spanning segment; the sequence is IYILNLAIADELLMLSVPFLVTSTLL. At 121 to 131 the chain is on the extracellular side; sequence RHWPFGALLCR. Cys-130 and Cys-208 form a disulfide bridge. Residues 132–153 form a helical membrane-spanning segment; it reads LVLSVDAVNMFTSIYCLTVLSV. Topologically, residues 154–175 are cytoplasmic; it reads DRYVAVVHPIKAARYRRPTVAK. The helical transmembrane segment at 176–196 threads the bilayer; it reads VVNLGVWVLSLLVILPIVVFS. The Extracellular portion of the chain corresponds to 197–219; it reads RTAANSDGTVACNMLMPEPAQRW. The chain crosses the membrane as a helical span at residues 220–244; the sequence is LVGFVLYTFLMGFLLPVGAICLCYV. The Cytoplasmic segment spans residues 245–270; that stretch reads LIIAKMRMVALKAGWQQRKRSERKIT. Residues 271 to 296 form a helical membrane-spanning segment; that stretch reads LMVMMVVMVFVICWMPFYVVQLVNVF. Residues 297–303 are Extracellular-facing; sequence AEQDDAT. A helical transmembrane segment spans residues 304 to 327; it reads VSQLSVILGYANSCANPILYGFLS. Topologically, residues 328 to 391 are cytoplasmic; that stretch reads DNFKRSFQRI…GTCASRISTL (64 aa). A lipid anchor (S-palmitoyl cysteine) is attached at Cys-339.

Belongs to the G-protein coupled receptor 1 family. As to expression, jejunum and stomach.

It localises to the cell membrane. Receptor for somatostatin with higher affinity for somatostatin-14 than -28. This receptor is coupled via pertussis toxin sensitive G proteins to inhibition of adenylyl cyclase. In addition it stimulates phosphotyrosine phosphatase and Na(+)/H(+) exchanger via pertussis toxin insensitive G proteins. This is Somatostatin receptor type 1 (Sstr1) from Mus musculus (Mouse).